The following is a 151-amino-acid chain: MKVRIAVVGKLDGFIKEGIKHYEKFLRRFCKLEVLEIKRVHRGSIEEIVRKETEDLANRILLGSFVMVMDRRGEEVSSEEFADFLKDLEMKGKDITILIGGPHGLNEEIFAKAHRVFSLSKMTFTHGMTVLIVLEQIFRAFKIIHGENYHY.

S-adenosyl-L-methionine contacts are provided by residues Gly-100 and 119 to 124 (LSKMTF).

This sequence belongs to the RNA methyltransferase RlmH family. As to quaternary structure, homodimer.

It localises to the cytoplasm. It catalyses the reaction pseudouridine(1915) in 23S rRNA + S-adenosyl-L-methionine = N(3)-methylpseudouridine(1915) in 23S rRNA + S-adenosyl-L-homocysteine + H(+). In terms of biological role, specifically methylates the pseudouridine at position 1915 (m3Psi1915) in 23S rRNA. The chain is Ribosomal RNA large subunit methyltransferase H from Thermotoga sp. (strain RQ2).